Reading from the N-terminus, the 641-residue chain is 1-deoxy-D-xylulose-5-phosphate synthase (641 aa).

Residues H80 and 121–123 (GHS) each bind thiamine diphosphate. Mg(2+) is bound at residue D152. Thiamine diphosphate contacts are provided by residues 153 to 154 (GS), N181, Y290, and E372. N181 is a Mg(2+) binding site.

The protein belongs to the transketolase family. DXPS subfamily. As to quaternary structure, homodimer. The cofactor is Mg(2+). Thiamine diphosphate serves as cofactor.

The catalysed reaction is D-glyceraldehyde 3-phosphate + pyruvate + H(+) = 1-deoxy-D-xylulose 5-phosphate + CO2. It functions in the pathway metabolic intermediate biosynthesis; 1-deoxy-D-xylulose 5-phosphate biosynthesis; 1-deoxy-D-xylulose 5-phosphate from D-glyceraldehyde 3-phosphate and pyruvate: step 1/1. Its function is as follows. Catalyzes the acyloin condensation reaction between C atoms 2 and 3 of pyruvate and glyceraldehyde 3-phosphate to yield 1-deoxy-D-xylulose-5-phosphate (DXP). In Rhodobacter capsulatus (Rhodopseudomonas capsulata), this protein is 1-deoxy-D-xylulose-5-phosphate synthase.